Reading from the N-terminus, the 97-residue chain is Thiosulfate sulfurtransferase/rhodanese-like domain-containing protein 3 (97 aa).

One can recognise a Rhodanese domain in the interval 32-84; sequence YKELKNLLNSKNIMLIDVREIWEILEYQKIPESINVPLDEVGEALQMNPRDFK. Lysine 84 bears the N6-succinyllysine mark.

This chain is Thiosulfate sulfurtransferase/rhodanese-like domain-containing protein 3 (TSTD3), found in Homo sapiens (Human).